The chain runs to 97 residues: Putative membrane protein insertion efficiency factor (97 aa).

It belongs to the UPF0161 family.

It is found in the cell membrane. In terms of biological role, could be involved in insertion of integral membrane proteins into the membrane. This is Putative membrane protein insertion efficiency factor from Lactobacillus johnsonii (strain CNCM I-12250 / La1 / NCC 533).